The primary structure comprises 103 residues: Truncated secreted TNF-receptor-like protein A53 (103 aa).

The TNFR-Cys 1 repeat unit spans residues 36 to 73 (SCDKGEYLDKRHNQCCNRCPPGEFAKVRCNGNDNTKCE). 3 disulfides stabilise this stretch: Cys37/Cys50, Cys51/Cys64, and Cys54/Cys72. A TNFR-Cys 2; truncated repeat occupies 74–103 (RCPPHTYTTIPIILMDVINVENAQQDHLIR).

This sequence belongs to the poxviridae A53R protein family.

This Vaccinia virus (strain Copenhagen) (VACV) protein is Truncated secreted TNF-receptor-like protein A53.